The primary structure comprises 352 residues: Alanine racemase (352 aa).

The Proton acceptor; specific for D-alanine role is filled by Lys-34. Lys-34 carries the N6-(pyridoxal phosphate)lysine modification. Arg-126 is a substrate binding site. Residue Tyr-248 is the Proton acceptor; specific for L-alanine of the active site. Residue Met-296 coordinates substrate.

Belongs to the alanine racemase family. Pyridoxal 5'-phosphate serves as cofactor.

The enzyme catalyses L-alanine = D-alanine. It functions in the pathway amino-acid biosynthesis; D-alanine biosynthesis; D-alanine from L-alanine: step 1/1. Its function is as follows. Catalyzes the interconversion of L-alanine and D-alanine. May also act on other amino acids. The sequence is that of Alanine racemase (alr) from Deinococcus deserti (strain DSM 17065 / CIP 109153 / LMG 22923 / VCD115).